The chain runs to 637 residues: Chaperone protein DnaK (637 aa).

Thr198 carries the phosphothreonine; by autocatalysis modification. A disordered region spans residues 597 to 637; the sequence is MYQQQAEGDAARDAAQDAAKDDVVDAEFTEVDDDKNDKKSA. Over residues 605–619 the composition is skewed to basic and acidic residues; sequence DAARDAAQDAAKDDV. Positions 620 to 630 are enriched in acidic residues; that stretch reads VDAEFTEVDDD.

This sequence belongs to the heat shock protein 70 family.

Acts as a chaperone. In Afipia carboxidovorans (strain ATCC 49405 / DSM 1227 / KCTC 32145 / OM5) (Oligotropha carboxidovorans), this protein is Chaperone protein DnaK.